Here is a 466-residue protein sequence, read N- to C-terminus: 3-isopropylmalate dehydratase large subunit (466 aa).

[4Fe-4S] cluster-binding residues include C347, C407, and C410.

The protein belongs to the aconitase/IPM isomerase family. LeuC type 1 subfamily. As to quaternary structure, heterodimer of LeuC and LeuD. [4Fe-4S] cluster serves as cofactor.

It carries out the reaction (2R,3S)-3-isopropylmalate = (2S)-2-isopropylmalate. It functions in the pathway amino-acid biosynthesis; L-leucine biosynthesis; L-leucine from 3-methyl-2-oxobutanoate: step 2/4. Its function is as follows. Catalyzes the isomerization between 2-isopropylmalate and 3-isopropylmalate, via the formation of 2-isopropylmaleate. This Pectobacterium atrosepticum (strain SCRI 1043 / ATCC BAA-672) (Erwinia carotovora subsp. atroseptica) protein is 3-isopropylmalate dehydratase large subunit.